The primary structure comprises 334 residues: Protein-methionine-sulfoxide reductase catalytic subunit MsrP (334 aa).

Residues 1 to 44 constitute a signal peptide (tat-type signal); that stretch reads MKKNQFLKESDVTAESVFFMKRRQVLKALGISAAALSLPHAAHA. Residues asparagine 88, 91–92, cysteine 146, threonine 181, asparagine 233, arginine 238, and 249–251 contribute to the Mo-molybdopterin site; these read YE and GIK.

Belongs to the MsrP family. Heterodimer of a catalytic subunit (MsrP) and a heme-binding subunit (MsrQ). Mo-molybdopterin serves as cofactor. Post-translationally, predicted to be exported by the Tat system. The position of the signal peptide cleavage has not been experimentally proven.

The protein resides in the periplasm. The catalysed reaction is L-methionyl-[protein] + a quinone + H2O = L-methionyl-(S)-S-oxide-[protein] + a quinol. The enzyme catalyses L-methionyl-[protein] + a quinone + H2O = L-methionyl-(R)-S-oxide-[protein] + a quinol. Part of the MsrPQ system that repairs oxidized periplasmic proteins containing methionine sulfoxide residues (Met-O), using respiratory chain electrons. Thus protects these proteins from oxidative-stress damage caused by reactive species of oxygen and chlorine generated by the host defense mechanisms. MsrPQ is essential for the maintenance of envelope integrity under bleach stress, rescuing a wide series of structurally unrelated periplasmic proteins from methionine oxidation, including the primary periplasmic chaperone SurA and the lipoprotein Pal. The catalytic subunit MsrP is non-stereospecific, being able to reduce both (R-) and (S-) diastereoisomers of methionine sulfoxide. The protein is Protein-methionine-sulfoxide reductase catalytic subunit MsrP of Shigella sonnei (strain Ss046).